The chain runs to 310 residues: Porphobilinogen deaminase (310 aa).

Cys-242 carries the post-translational modification S-(dipyrrolylmethanemethyl)cysteine.

It belongs to the HMBS family. In terms of assembly, monomer. Dipyrromethane is required as a cofactor.

The enzyme catalyses 4 porphobilinogen + H2O = hydroxymethylbilane + 4 NH4(+). It functions in the pathway porphyrin-containing compound metabolism; protoporphyrin-IX biosynthesis; coproporphyrinogen-III from 5-aminolevulinate: step 2/4. Tetrapolymerization of the monopyrrole PBG into the hydroxymethylbilane pre-uroporphyrinogen in several discrete steps. In Shewanella halifaxensis (strain HAW-EB4), this protein is Porphobilinogen deaminase.